The primary structure comprises 179 residues: Insulin-like growth factor 2 (179 aa).

The N-terminal stretch at 1–24 is a signal peptide; sequence MGITAGKSVLVLLAFLAFASCCYA. Residues 25–52 form a b region; the sequence is AYRPSETLCGGELVDTLQFVCGDRGFYF. Disulfide bonds link Cys-33-Cys-71, Cys-45-Cys-84, and Cys-70-Cys-75. Residues 53–64 form a c region; it reads SRPSSRINRRSR. Residues 65-85 form an a region; that stretch reads GIVEECCFRSCDLALLETYCA. The segment at 86–91 is d; sequence TPAKSE. The propeptide at 92–179 is e peptide; the sequence is RDVSASTTVL…GGASSKASSD (88 aa). Residue Thr-106 is glycosylated (O-linked (GalNAc...) threonine). The O-linked (GalNAc...) serine glycan is linked to Ser-154. A disordered region spans residues 160-179; sequence ALPTQDPATHGGASSKASSD. Thr-163 carries O-linked (GalNAc...) threonine glycosylation.

The protein belongs to the insulin family. In terms of assembly, interacts with MYORG; this interaction is required for IGF2 secretion. Interacts with integrins ITGAV:ITGB3 and ITGA6:ITGB4; integrin-binding is required for IGF2 signaling. Interacts with IGFBP2. Proteolytically processed by PCSK4, proIGF2 is cleaved at Arg-128 and Arg-92 to generate big-IGF2 and mature IGF2.

It localises to the secreted. Functionally, the insulin-like growth factors possess growth-promoting activity. Major fetal growth hormone in mammals. Plays a key role in regulating fetoplacental development. IGF2 is influenced by placental lactogen. Also involved in tissue differentiation. In adults, involved in glucose metabolism in adipose tissue, skeletal muscle and liver. Acts as a ligand for integrin which is required for IGF2 signaling. Positively regulates myogenic transcription factor MYOD1 function by facilitating the recruitment of transcriptional coactivators, thereby controlling muscle terminal differentiation. Inhibits myoblast differentiation and modulates metabolism via increasing the mitochondrial respiration rate. In terms of biological role, preptin undergoes glucose-mediated co-secretion with insulin, and acts as a physiological amplifier of glucose-mediated insulin secretion. Exhibits osteogenic properties by increasing osteoblast mitogenic activity through phosphoactivation of MAPK1 and MAPK3. This chain is Insulin-like growth factor 2, found in Bos taurus (Bovine).